The primary structure comprises 49 residues: Large ribosomal subunit protein bL33A (49 aa).

It belongs to the bacterial ribosomal protein bL33 family.

The protein is Large ribosomal subunit protein bL33A (rpmG1) of Enterococcus faecalis (strain ATCC 700802 / V583).